We begin with the raw amino-acid sequence, 309 residues long: tRNA dimethylallyltransferase (309 aa).

11–18 lines the ATP pocket; the sequence is GPTASGKS. 13 to 18 contacts substrate; sequence TASGKS. Interaction with substrate tRNA stretches follow at residues 36 to 39 and 160 to 164; these read DSMQ and QRLIR.

The protein belongs to the IPP transferase family. Monomer. The cofactor is Mg(2+).

It catalyses the reaction adenosine(37) in tRNA + dimethylallyl diphosphate = N(6)-dimethylallyladenosine(37) in tRNA + diphosphate. Functionally, catalyzes the transfer of a dimethylallyl group onto the adenine at position 37 in tRNAs that read codons beginning with uridine, leading to the formation of N6-(dimethylallyl)adenosine (i(6)A). The chain is tRNA dimethylallyltransferase from Rickettsia felis (strain ATCC VR-1525 / URRWXCal2) (Rickettsia azadi).